The chain runs to 546 residues: MRIEEWCRSRLGEFLLFVLAVSLFALSHPNPLLPRGCALLAYGALAPLFLLVRWASGFAVVFWGGAYGAFSYGAFSYWLFVFHPVALCVVAGFSALFLAALCLALKAGGAFWQRRALLVQCLVWLGYEYAKTLGFLGFPYGVMGYSQWRVLPLIQVASVFGVWVVSALVVFPSAWLASVLGQWVEESERNARAFLSAAYSHWVSALVWVGLCGFCVCAAKAGWWPDCTAHTRAKVALVQPNGDPRRGGIESYRADFSTLTYLSDWALERYPDVDLVVWPETAFVPRIDWHYRYRHEQQSFQLVCDLLDYVNAKNCPFIIGSDDAYKKRTKEGNWERVDYNAALLFIPGVNVLPPSPQRYHKIKLVPFTEYFPYKRVFPWFYNFLEKQDARFWAQGSEFVVFEARGLKFSVPICFEDAFGYITREFCARGASLLVNISNDSWAKSLSCQYQHLSMAVFRAIENRRALVRASTSGQTVAIAPDGRILDELQPFAPGVLVADVPIVTCACGGYRYWGDALGVFFCVASLFILIAGGVRHMLRCRRGGWR.

7 consecutive transmembrane segments (helical) span residues 14 to 34 (FLLF…PLLP), 41 to 61 (AYGA…FAVV), 62 to 82 (FWGG…LFVF), 85 to 105 (VALC…CLAL), 122 to 142 (LVWL…PYGV), 151 to 171 (LPLI…LVVF), and 194 to 214 (FLSA…LCGF). One can recognise a CN hydrolase domain in the interval 233–502 (AKVALVQPNG…PGVLVADVPI (270 aa)). The active-site Proton acceptor is glutamate 280. Residue lysine 361 is part of the active site. Cysteine 413 (nucleophile) is an active-site residue. The helical transmembrane segment at 514 to 534 (GDALGVFFCVASLFILIAGGV) threads the bilayer.

Belongs to the CN hydrolase family. Apolipoprotein N-acyltransferase subfamily.

It is found in the cell inner membrane. It catalyses the reaction N-terminal S-1,2-diacyl-sn-glyceryl-L-cysteinyl-[lipoprotein] + a glycerophospholipid = N-acyl-S-1,2-diacyl-sn-glyceryl-L-cysteinyl-[lipoprotein] + a 2-acyl-sn-glycero-3-phospholipid + H(+). The protein operates within protein modification; lipoprotein biosynthesis (N-acyl transfer). Its function is as follows. Catalyzes the phospholipid dependent N-acylation of the N-terminal cysteine of apolipoprotein, the last step in lipoprotein maturation. In Treponema pallidum (strain Nichols), this protein is Apolipoprotein N-acyltransferase 1.